A 265-amino-acid polypeptide reads, in one-letter code: Hemin import ATP-binding protein HmuV (265 aa).

The ABC transporter domain maps to Leu-13–Pro-249. Gly-45–Ser-52 provides a ligand contact to ATP.

The protein belongs to the ABC transporter superfamily. Heme (hemin) importer (TC 3.A.1.14.5) family. The complex is composed of two ATP-binding proteins (HmuV), two transmembrane proteins (HmuU) and a solute-binding protein (HmuT).

The protein resides in the cell inner membrane. Its function is as follows. Part of the ABC transporter complex HmuTUV involved in hemin import. Responsible for energy coupling to the transport system. The polypeptide is Hemin import ATP-binding protein HmuV (Photobacterium damsela subsp. piscicida (Pasteurella piscicida)).